The sequence spans 208 residues: Urease accessory protein UreE (208 aa).

Residues 145–195 (AEAHGHGQAHAHDHHDHDHHDHGHDHAHHDHAHHDHAHDHHGHDHAHDHAH) form a disordered region.

The protein belongs to the UreE family.

It localises to the cytoplasm. Involved in urease metallocenter assembly. Binds nickel. Probably functions as a nickel donor during metallocenter assembly. This chain is Urease accessory protein UreE, found in Azorhizobium caulinodans (strain ATCC 43989 / DSM 5975 / JCM 20966 / LMG 6465 / NBRC 14845 / NCIMB 13405 / ORS 571).